Here is a 511-residue protein sequence, read N- to C-terminus: MEEIQRYLQPDSSSSQQHNFLYPLIFQEYIYALAHDHGLNRNRSILLENPGYNNKFSFLIVKRLITRMYQQNHFRISTNDSNKNPFLGCNKSLYSQMISEGFAFIVEIPFSLRLISSLSSFEGKKIFKSHNLRSIHSTFPFLEDNFAHLNYVLDILIPYPVHLEILVQTLRYWVKDASSLHLLRFFLHEYWNLNSLITSKKPGYSFSKTNQRFFFFLYNSYVYESESTFVFLRNQSSHLRSTSFGALLERIYFYGKIERLVEVFAKDFQVTLWLFKDPFMHYVRYQGKSILASKGTFLLMNKWKFYLVNFWQCNFSLCFPTGRIHINQLSNHSRDFMGYLSSVRLNPSMVRSQMLENAFLINNGIKKFDTLVPIIPLIGSLAKANFCTVLGHPISKPVWSDLSDSDIIDRFGRICRNLFHYYSGSSKKKTLYRIKYILRLSCARTLARKHKSTVRTFLKRSGSELLEEFLTSEEQVLSLTFPRASSSLWGVYRSRIWYLDIFCINDLANYQ.

The protein belongs to the intron maturase 2 family. MatK subfamily.

Its subcellular location is the plastid. The protein resides in the chloroplast. Its function is as follows. Usually encoded in the trnK tRNA gene intron. Probably assists in splicing its own and other chloroplast group II introns. This chain is Maturase K, found in Mandragora officinarum (Mandrake).